Consider the following 153-residue polypeptide: Large ribosomal subunit protein uL15 (153 aa).

A disordered region spans residues 21 to 42 (RGIGSGKGKTGGRGIKGQKSRS). Residues 23–35 (IGSGKGKTGGRGI) show a composition bias toward gly residues.

This sequence belongs to the universal ribosomal protein uL15 family. In terms of assembly, part of the 50S ribosomal subunit.

Functionally, binds to the 23S rRNA. This chain is Large ribosomal subunit protein uL15, found in Rickettsia peacockii (strain Rustic).